The sequence spans 201 residues: Dephospho-CoA kinase (201 aa).

In terms of domain architecture, DPCK spans 4–201 (IIGITGGIAS…LEGGRQDDRD (198 aa)). 12–17 (ASGKST) serves as a coordination point for ATP.

Belongs to the CoaE family.

It is found in the cytoplasm. It catalyses the reaction 3'-dephospho-CoA + ATP = ADP + CoA + H(+). It participates in cofactor biosynthesis; coenzyme A biosynthesis; CoA from (R)-pantothenate: step 5/5. In terms of biological role, catalyzes the phosphorylation of the 3'-hydroxyl group of dephosphocoenzyme A to form coenzyme A. This Streptococcus pneumoniae (strain ATCC BAA-255 / R6) protein is Dephospho-CoA kinase.